We begin with the raw amino-acid sequence, 322 residues long: Serine protease 38 (322 aa).

The signal sequence occupies residues 1–28 (MAALTSGLGVLGYLLFPLLLASPTWVTS). Residues 29 to 55 (VSRRHPKSQANSLSGDVACGQPVLQGK) constitute a propeptide, activation peptide. In terms of domain architecture, Peptidase S1 spans 56-289 (LLGGEFARDR…FLSWIRYHLQ (234 aa)). Cysteines 81 and 97 form a disulfide. Residues His-96 and Asp-146 each act as charge relay system in the active site. Asn-176 carries N-linked (GlcNAc...) asparagine glycosylation. Intrachain disulfides connect Cys-179–Cys-247, Cys-210–Cys-226, and Cys-237–Cys-265. Ser-241 (charge relay system) is an active-site residue. 2 N-linked (GlcNAc...) asparagine glycosylation sites follow: Asn-250 and Asn-276.

It belongs to the peptidase S1 family.

Its subcellular location is the secreted. The chain is Serine protease 38 (Prss38) from Mus musculus (Mouse).